The sequence spans 197 residues: Imidazoleglycerol-phosphate dehydratase (197 aa).

This sequence belongs to the imidazoleglycerol-phosphate dehydratase family.

It localises to the cytoplasm. The enzyme catalyses D-erythro-1-(imidazol-4-yl)glycerol 3-phosphate = 3-(imidazol-4-yl)-2-oxopropyl phosphate + H2O. Its pathway is amino-acid biosynthesis; L-histidine biosynthesis; L-histidine from 5-phospho-alpha-D-ribose 1-diphosphate: step 6/9. This Laribacter hongkongensis (strain HLHK9) protein is Imidazoleglycerol-phosphate dehydratase.